A 198-amino-acid polypeptide reads, in one-letter code: Recombination protein RecR (198 aa).

Residues 56 to 71 form a C4-type zinc finger; that stretch reads CEICGNVSEQATCSIC. The region spanning 79–174 is the Toprim domain; that stretch reads ALICVVEEAK…RVTRLASGLP (96 aa).

This sequence belongs to the RecR family.

Functionally, may play a role in DNA repair. It seems to be involved in an RecBC-independent recombinational process of DNA repair. It may act with RecF and RecO. The sequence is that of Recombination protein RecR from Leifsonia xyli subsp. xyli (strain CTCB07).